A 122-amino-acid chain; its full sequence is Holo-[acyl-carrier-protein] synthase (122 aa).

Residues D8 and E56 each coordinate Mg(2+).

The protein belongs to the P-Pant transferase superfamily. AcpS family. Mg(2+) is required as a cofactor.

Its subcellular location is the cytoplasm. It carries out the reaction apo-[ACP] + CoA = holo-[ACP] + adenosine 3',5'-bisphosphate + H(+). Functionally, transfers the 4'-phosphopantetheine moiety from coenzyme A to a Ser of acyl-carrier-protein. This is Holo-[acyl-carrier-protein] synthase from Salinispora arenicola (strain CNS-205).